Consider the following 190-residue polypeptide: Superoxide dismutase [Cu-Zn] (190 aa).

The signal sequence occupies residues 1–23; the sequence is MKLTNLALAFTLFGASAVAFAHA. 3 residues coordinate Cu cation: histidine 83, histidine 85, and histidine 108. Cysteine 90 and cysteine 186 are joined by a disulfide. The Zn(2+) site is built by histidine 108, histidine 117, histidine 126, and aspartate 129. The segment at 162-181 is disordered; it reads MIHEGGDNHSDHPAPLGGGG. Histidine 164 contacts Cu cation.

It belongs to the Cu-Zn superoxide dismutase family. Homodimer. Cu cation is required as a cofactor. Requires Zn(2+) as cofactor.

The protein localises to the periplasm. It catalyses the reaction 2 superoxide + 2 H(+) = H2O2 + O2. Its function is as follows. Destroys radicals which are normally produced within the cells and which are toxic to biological systems. In Actinobacillus pleuropneumoniae (Haemophilus pleuropneumoniae), this protein is Superoxide dismutase [Cu-Zn] (sodC).